The sequence spans 199 residues: Probable thymidylate kinase (199 aa).

An ATP-binding site is contributed by 7–14 (GLDGSGKT).

The protein belongs to the thymidylate kinase family.

The enzyme catalyses dTMP + ATP = dTDP + ADP. This Halobacterium salinarum (strain ATCC 29341 / DSM 671 / R1) protein is Probable thymidylate kinase.